The sequence spans 538 residues: Putative cysteine ligase BshC (538 aa).

The stretch at 460–484 forms a coiled coil; that stretch reads KINEQIELLERMLKRNVEKKHEVEL.

It belongs to the BshC family.

In terms of biological role, involved in bacillithiol (BSH) biosynthesis. May catalyze the last step of the pathway, the addition of cysteine to glucosamine malate (GlcN-Mal) to generate BSH. The chain is Putative cysteine ligase BshC from Bacillus anthracis (strain A0248).